A 293-amino-acid polypeptide reads, in one-letter code: Ribosomal RNA small subunit methyltransferase A (293 aa).

S-adenosyl-L-methionine contacts are provided by Asn36, Leu38, Gly63, Glu84, Asp111, and Asn132.

This sequence belongs to the class I-like SAM-binding methyltransferase superfamily. rRNA adenine N(6)-methyltransferase family. RsmA subfamily.

The protein resides in the cytoplasm. It catalyses the reaction adenosine(1518)/adenosine(1519) in 16S rRNA + 4 S-adenosyl-L-methionine = N(6)-dimethyladenosine(1518)/N(6)-dimethyladenosine(1519) in 16S rRNA + 4 S-adenosyl-L-homocysteine + 4 H(+). Specifically dimethylates two adjacent adenosines (A1518 and A1519) in the loop of a conserved hairpin near the 3'-end of 16S rRNA in the 30S particle. May play a critical role in biogenesis of 30S subunits. The protein is Ribosomal RNA small subunit methyltransferase A of Treponema denticola (strain ATCC 35405 / DSM 14222 / CIP 103919 / JCM 8153 / KCTC 15104).